We begin with the raw amino-acid sequence, 106 residues long: UPF0122 protein Exig_1902 (106 aa).

This sequence belongs to the UPF0122 family.

In terms of biological role, might take part in the signal recognition particle (SRP) pathway. This is inferred from the conservation of its genetic proximity to ftsY/ffh. May be a regulatory protein. This Exiguobacterium sibiricum (strain DSM 17290 / CCUG 55495 / CIP 109462 / JCM 13490 / 255-15) protein is UPF0122 protein Exig_1902.